The following is a 402-amino-acid chain: MTSPRVNLLDFDADQMAAYVAGLNEKPFRAKQLMQWIHQRGVSDINDMSDLAKSFRATLLDKVEVLSLPVIKDEHATDGTRKWLLDVGAGNAVESVFIPEDDRGTLCISSQAGCAVNCRFCSTGRQGFSRNLTSGEIIGQLWFAEHLLRNDPEAIRRIEKYPTPGWEHTGRVISNVVMMGMGEPLLNYDNVVSALRLMLDDRAYGLSRRRVTVSTSGVVPMIDRLAQDCPVALAVSLHAPNDALRDQLVPLNQKYPLRELLDACERYLPFAPRDFLTFEYCMLDGVNDSDIQAKELVRLLRNIKCKINLIPFNPFPESGLKRSSAQRVNAFAGILLDAGMVATVRKTRGDDIAAACGQLAGDVVDRTRVRERDIHSAEIEIAEVESDVQPNEQPIEWLKKLT.

Residue glutamate 94 is the Proton acceptor of the active site. A Radical SAM core domain is found at 100–351; it reads EDDRGTLCIS…ATVRKTRGDD (252 aa). An intrachain disulfide couples cysteine 107 to cysteine 356. The [4Fe-4S] cluster site is built by cysteine 114, cysteine 118, and cysteine 121. Residues 182-183, serine 214, 236-238, and asparagine 313 each bind S-adenosyl-L-methionine; these read GE and SLH. Catalysis depends on cysteine 356, which acts as the S-methylcysteine intermediate.

Belongs to the radical SAM superfamily. RlmN family. Requires [4Fe-4S] cluster as cofactor.

The protein resides in the cytoplasm. The enzyme catalyses adenosine(2503) in 23S rRNA + 2 reduced [2Fe-2S]-[ferredoxin] + 2 S-adenosyl-L-methionine = 2-methyladenosine(2503) in 23S rRNA + 5'-deoxyadenosine + L-methionine + 2 oxidized [2Fe-2S]-[ferredoxin] + S-adenosyl-L-homocysteine. The catalysed reaction is adenosine(37) in tRNA + 2 reduced [2Fe-2S]-[ferredoxin] + 2 S-adenosyl-L-methionine = 2-methyladenosine(37) in tRNA + 5'-deoxyadenosine + L-methionine + 2 oxidized [2Fe-2S]-[ferredoxin] + S-adenosyl-L-homocysteine. Its function is as follows. Specifically methylates position 2 of adenine 2503 in 23S rRNA and position 2 of adenine 37 in tRNAs. m2A2503 modification seems to play a crucial role in the proofreading step occurring at the peptidyl transferase center and thus would serve to optimize ribosomal fidelity. This is Dual-specificity RNA methyltransferase RlmN from Polynucleobacter asymbioticus (strain DSM 18221 / CIP 109841 / QLW-P1DMWA-1) (Polynucleobacter necessarius subsp. asymbioticus).